The chain runs to 1099 residues: Carbamoyl phosphate synthase large chain (1099 aa).

The carboxyphosphate synthetic domain stretch occupies residues 1–402; it reads MPKREDIKRI…ALGKALRSLE (402 aa). Residues arginine 129, arginine 169, glycine 175, glycine 176, glutamate 208, valine 210, glutamate 215, glycine 241, isoleucine 242, histidine 243, glutamine 285, and glutamate 299 each contribute to the ATP site. One can recognise an ATP-grasp 1 domain in the interval 133-328; it reads KETMEKAGLE…IAKVAALLAV (196 aa). Mg(2+) is bound by residues glutamine 285, glutamate 299, and asparagine 301. Mn(2+) contacts are provided by glutamine 285, glutamate 299, and asparagine 301. Positions 403 to 541 are oligomerization domain; sequence LDAAPKLDLE…STYNGVENEA (139 aa). A carbamoyl phosphate synthetic domain region spans residues 542–944; that stretch reads VPSDREKIMI…AFAKAQIAAG (403 aa). The region spanning 666–857 is the ATP-grasp 2 domain; that stretch reads AKLLKQIGLK…VARIAAKIMV (192 aa). The ATP site is built by arginine 702, lysine 741, leucine 743, glutamate 748, glycine 773, valine 774, histidine 775, serine 776, glutamine 816, and glutamate 828. Mg(2+)-binding residues include glutamine 816, glutamate 828, and asparagine 830. The Mn(2+) site is built by glutamine 816, glutamate 828, and asparagine 830. In terms of domain architecture, MGS-like spans 945-1099; sequence NPLPTTGAIL…VRRLTDTWKM (155 aa). Residues 945 to 1099 are allosteric domain; sequence NPLPTTGAIL…VRRLTDTWKM (155 aa).

It belongs to the CarB family. In terms of assembly, composed of two chains; the small (or glutamine) chain promotes the hydrolysis of glutamine to ammonia, which is used by the large (or ammonia) chain to synthesize carbamoyl phosphate. Tetramer of heterodimers (alpha,beta)4. It depends on Mg(2+) as a cofactor. Requires Mn(2+) as cofactor.

It catalyses the reaction hydrogencarbonate + L-glutamine + 2 ATP + H2O = carbamoyl phosphate + L-glutamate + 2 ADP + phosphate + 2 H(+). The enzyme catalyses hydrogencarbonate + NH4(+) + 2 ATP = carbamoyl phosphate + 2 ADP + phosphate + 2 H(+). The protein operates within amino-acid biosynthesis; L-arginine biosynthesis; carbamoyl phosphate from bicarbonate: step 1/1. Its pathway is pyrimidine metabolism; UMP biosynthesis via de novo pathway; (S)-dihydroorotate from bicarbonate: step 1/3. In terms of biological role, large subunit of the glutamine-dependent carbamoyl phosphate synthetase (CPSase). CPSase catalyzes the formation of carbamoyl phosphate from the ammonia moiety of glutamine, carbonate, and phosphate donated by ATP, constituting the first step of 2 biosynthetic pathways, one leading to arginine and/or urea and the other to pyrimidine nucleotides. The large subunit (synthetase) binds the substrates ammonia (free or transferred from glutamine from the small subunit), hydrogencarbonate and ATP and carries out an ATP-coupled ligase reaction, activating hydrogencarbonate by forming carboxy phosphate which reacts with ammonia to form carbamoyl phosphate. The protein is Carbamoyl phosphate synthase large chain of Thermotoga sp. (strain RQ2).